The chain runs to 369 residues: Uroporphyrinogen decarboxylase (369 aa).

Residues 36-40 (RQAGR), Asp86, Tyr162, Ser217, and His342 each bind substrate.

Belongs to the uroporphyrinogen decarboxylase family. Homodimer.

The protein resides in the cytoplasm. It carries out the reaction uroporphyrinogen III + 4 H(+) = coproporphyrinogen III + 4 CO2. It functions in the pathway porphyrin-containing compound metabolism; protoporphyrin-IX biosynthesis; coproporphyrinogen-III from 5-aminolevulinate: step 4/4. Its function is as follows. Catalyzes the decarboxylation of four acetate groups of uroporphyrinogen-III to yield coproporphyrinogen-III. The polypeptide is Uroporphyrinogen decarboxylase (Albidiferax ferrireducens (strain ATCC BAA-621 / DSM 15236 / T118) (Rhodoferax ferrireducens)).